The following is a 171-amino-acid chain: Small ribosomal subunit protein uS5 (171 aa).

The region spanning 16-79 is the S5 DRBM domain; sequence LVERLVTVDR…EAAKRNMITV (64 aa).

The protein belongs to the universal ribosomal protein uS5 family. Part of the 30S ribosomal subunit. Contacts proteins S4 and S8.

Its function is as follows. With S4 and S12 plays an important role in translational accuracy. Located at the back of the 30S subunit body where it stabilizes the conformation of the head with respect to the body. This is Small ribosomal subunit protein uS5 from Psychrobacter arcticus (strain DSM 17307 / VKM B-2377 / 273-4).